A 502-amino-acid polypeptide reads, in one-letter code: Maturase K (502 aa).

This sequence belongs to the intron maturase 2 family. MatK subfamily.

It localises to the plastid. The protein resides in the chloroplast. In terms of biological role, usually encoded in the trnK tRNA gene intron. Probably assists in splicing its own and other chloroplast group II introns. The protein is Maturase K of Cephalotaxus fortunei (Chinese plum-yew).